A 225-amino-acid chain; its full sequence is Protein YIP4 (225 aa).

Serine 27 and serine 28 each carry phosphoserine. Helical transmembrane passes span 91 to 111 (WDLW…ALST), 118 to 138 (SVFT…SLNI), 154 to 176 (LGYS…LIFI), 180 to 199 (VIVA…LQNS), and 205 to 225 (KLLA…IIFL).

The protein belongs to the YIP1 family. As to quaternary structure, interacts with the YIP1 family members yip1 and yip5, and with several Rab GTPases.

It localises to the membrane. In terms of biological role, may be involved in proper membrane localization of Rab GTPases. In Schizosaccharomyces pombe (strain 972 / ATCC 24843) (Fission yeast), this protein is Protein YIP4.